We begin with the raw amino-acid sequence, 1415 residues long: Major viral transcription factor ICP4 homolog (1415 aa).

4 disordered regions span residues 48-272 (MDDD…SSSG), 454-480 (DNSSETEKGISSKPSTSPSVLITTSTQ), 691-935 (LLND…PSCY), and 1371-1415 (QHEE…TFTD). A compositionally biased stretch (polar residues) spans 96-105 (PRLTTPSSGR). A compositionally biased stretch (low complexity) spans 125 to 187 (PETSPSNEHI…LSSPSSSRSP (63 aa)). Positions 245–255 (GGGRPRGRPPK) are enriched in basic residues. Composition is skewed to polar residues over residues 263-272 (NDIQVTSSSG) and 465-480 (SKPSTSPSVLITTSTQ). A compositionally biased stretch (low complexity) spans 724–738 (STSSSQSASDKSPIK). Polar residues-rich tracts occupy residues 814-837 (KAQTDETLPETSTAHPSAMDQSSS) and 895-910 (VGQTLLDPTTTTHDIL). Positions 911–933 (SSSLPNRSCSSSPSPSKRPYHPS) are enriched in low complexity.

This sequence belongs to the herpesviridae ICP4 family. Post-translationally, a long stretch of serine residues may be a major site of phosphorylation.

The protein resides in the host nucleus. In terms of biological role, this IE protein is a multifunctional protein capable of migrating to the nucleus, binding to DNA, trans-activating other viral genes, and autoregulating its own synthesis. It is required for the switch from immediate-early to early mode of gene expression. The sequence is that of Major viral transcription factor ICP4 homolog (ICP4) from Gallus gallus (Chicken).